Consider the following 304-residue polypeptide: PHO85 cyclin-9 (304 aa).

One can recognise a Cyclin N-terminal domain in the interval 19 to 146; it reads EMIQFLATST…LLEYLNWDVR (128 aa).

It belongs to the cyclin family. PCL1,2 subfamily. In terms of assembly, forms a cyclin-CDK complex with PHO85.

In terms of biological role, m/G1-specific cyclin partner of the cyclin-dependent kinase (CDK) PHO85. May have a role in bud site selection in G1 phase. The sequence is that of PHO85 cyclin-9 (PCL9) from Saccharomyces cerevisiae (strain ATCC 204508 / S288c) (Baker's yeast).